Here is a 117-residue protein sequence, read N- to C-terminus: Large ribosomal subunit protein uL22 (117 aa).

The protein belongs to the universal ribosomal protein uL22 family. In terms of assembly, part of the 50S ribosomal subunit.

Functionally, this protein binds specifically to 23S rRNA; its binding is stimulated by other ribosomal proteins, e.g. L4, L17, and L20. It is important during the early stages of 50S assembly. It makes multiple contacts with different domains of the 23S rRNA in the assembled 50S subunit and ribosome. In terms of biological role, the globular domain of the protein is located near the polypeptide exit tunnel on the outside of the subunit, while an extended beta-hairpin is found that lines the wall of the exit tunnel in the center of the 70S ribosome. This chain is Large ribosomal subunit protein uL22, found in Lactobacillus gasseri (strain ATCC 33323 / DSM 20243 / BCRC 14619 / CIP 102991 / JCM 1131 / KCTC 3163 / NCIMB 11718 / NCTC 13722 / AM63).